A 400-amino-acid chain; its full sequence is Nicotinate phosphoribosyltransferase (400 aa).

H220 is modified (phosphohistidine; by autocatalysis).

The protein belongs to the NAPRTase family. Post-translationally, transiently phosphorylated on a His residue during the reaction cycle. Phosphorylation strongly increases the affinity for substrates and increases the rate of nicotinate D-ribonucleotide production. Dephosphorylation regenerates the low-affinity form of the enzyme, leading to product release.

The enzyme catalyses nicotinate + 5-phospho-alpha-D-ribose 1-diphosphate + ATP + H2O = nicotinate beta-D-ribonucleotide + ADP + phosphate + diphosphate. Its pathway is cofactor biosynthesis; NAD(+) biosynthesis; nicotinate D-ribonucleotide from nicotinate: step 1/1. In terms of biological role, catalyzes the synthesis of beta-nicotinate D-ribonucleotide from nicotinate and 5-phospho-D-ribose 1-phosphate at the expense of ATP. This is Nicotinate phosphoribosyltransferase from Shigella sonnei (strain Ss046).